We begin with the raw amino-acid sequence, 252 residues long: D-aminoacyl-tRNA deacylase (252 aa).

Belongs to the DtdA deacylase family. In terms of assembly, monomer. Zn(2+) serves as cofactor.

It catalyses the reaction a D-aminoacyl-tRNA + H2O = a tRNA + a D-alpha-amino acid + H(+). The catalysed reaction is glycyl-tRNA(Ala) + H2O = tRNA(Ala) + glycine + H(+). D-aminoacyl-tRNA deacylase with broad substrate specificity. By recycling D-aminoacyl-tRNA to D-amino acids and free tRNA molecules, this enzyme counteracts the toxicity associated with the formation of D-aminoacyl-tRNA entities in vivo. This Pyrobaculum islandicum (strain DSM 4184 / JCM 9189 / GEO3) protein is D-aminoacyl-tRNA deacylase.